A 94-amino-acid chain; its full sequence is Integration host factor subunit beta (94 aa).

This sequence belongs to the bacterial histone-like protein family. As to quaternary structure, heterodimer of an alpha and a beta chain.

This protein is one of the two subunits of integration host factor, a specific DNA-binding protein that functions in genetic recombination as well as in transcriptional and translational control. The polypeptide is Integration host factor subunit beta (Caulobacter sp. (strain K31)).